We begin with the raw amino-acid sequence, 187 residues long: Ribosome-recycling factor (187 aa).

It belongs to the RRF family.

It localises to the cytoplasm. Responsible for the release of ribosomes from messenger RNA at the termination of protein biosynthesis. May increase the efficiency of translation by recycling ribosomes from one round of translation to another. The chain is Ribosome-recycling factor from Mycoplasmopsis pulmonis (strain UAB CTIP) (Mycoplasma pulmonis).